The sequence spans 355 residues: tRNA-specific 2-thiouridylase MnmA (355 aa).

Residues 6 to 13 and Leu-33 each bind ATP; that span reads LLSGGVDS. The active-site Nucleophile is Cys-100. Cys-100 and Cys-195 are joined by a disulfide. Residue Gly-123 participates in ATP binding. An interaction with tRNA region spans residues 145 to 147; that stretch reads KDQ. Cys-195 acts as the Cysteine persulfide intermediate in catalysis.

The protein belongs to the MnmA/TRMU family.

It localises to the cytoplasm. The catalysed reaction is S-sulfanyl-L-cysteinyl-[protein] + uridine(34) in tRNA + AH2 + ATP = 2-thiouridine(34) in tRNA + L-cysteinyl-[protein] + A + AMP + diphosphate + H(+). Functionally, catalyzes the 2-thiolation of uridine at the wobble position (U34) of tRNA, leading to the formation of s(2)U34. The protein is tRNA-specific 2-thiouridylase MnmA of Borreliella burgdorferi (strain ATCC 35210 / DSM 4680 / CIP 102532 / B31) (Borrelia burgdorferi).